An 89-amino-acid polypeptide reads, in one-letter code: Acyl carrier protein MbtL (89 aa).

Positions 7-82 (ESVSAALTEI…DLEAAIQAKV (76 aa)) constitute a Carrier domain. O-(pantetheine 4'-phosphoryl)serine is present on serine 42.

4'-phosphopantetheine is transferred from CoA to a specific serine of apo-ACP, leading to the activated holo-ACP form.

Its subcellular location is the cytoplasm. Its pathway is siderophore biosynthesis; mycobactin biosynthesis. Acyl carrier protein involved in the formation of acyl-S-ACP intermediates within the mycobactin biosynthesis process. The sequence is that of Acyl carrier protein MbtL (mbtL) from Mycobacterium sp. (strain MCS).